We begin with the raw amino-acid sequence, 141 residues long: Nucleoside diphosphate kinase (141 aa).

ATP contacts are provided by Lys-11, Phe-59, Arg-87, Thr-93, Arg-104, and Asn-114. His-117 serves as the catalytic Pros-phosphohistidine intermediate.

It belongs to the NDK family. As to quaternary structure, homotetramer. It depends on Mg(2+) as a cofactor.

It localises to the cytoplasm. It carries out the reaction a 2'-deoxyribonucleoside 5'-diphosphate + ATP = a 2'-deoxyribonucleoside 5'-triphosphate + ADP. The enzyme catalyses a ribonucleoside 5'-diphosphate + ATP = a ribonucleoside 5'-triphosphate + ADP. Functionally, major role in the synthesis of nucleoside triphosphates other than ATP. The ATP gamma phosphate is transferred to the NDP beta phosphate via a ping-pong mechanism, using a phosphorylated active-site intermediate. This Histophilus somni (strain 2336) (Haemophilus somnus) protein is Nucleoside diphosphate kinase.